The chain runs to 345 residues: Leucine-rich repeat and transmembrane domain-containing protein 1 (345 aa).

An N-terminal signal peptide occupies residues 1–27 (MKGELLLFSSVIVLLQVVCSCPDKCYC). One can recognise an LRRNT domain in the interval 28–50 (QSSTNFVDCSQQGLAEIPSHLPP). Over 28 to 288 (QSSTNFVDCS…PANLRHAIAT (261 aa)) the chain is Extracellular. 5 LRR repeats span residues 51 to 72 (QTRT…AFRS), 75 to 96 (WLMT…AFHG), 99 to 120 (HLQV…LFHS), 123 to 144 (QLRE…LGET), and 147 to 168 (NLTI…LLES). Asparagine 104 carries N-linked (GlcNAc...) asparagine glycosylation. A glycan (N-linked (GlcNAc...) asparagine) is linked at asparagine 147. The LRRCT domain maps to 180 to 234 (NLWKCNCHLLGLKLWLEKFVYKGGLTDGIICESPDTWKGKDLLRIPHELYQPCPL). A helical membrane pass occupies residues 289-309 (VIITGVVCGIVCLMMLAAAIY). Topologically, residues 310–345 (GCTYAAITAQYHGGPLAQTNDPGKVEEKERFDSSPA) are cytoplasmic. Residues 326-345 (AQTNDPGKVEEKERFDSSPA) are disordered. Residues 332-345 (GKVEEKERFDSSPA) show a composition bias toward basic and acidic residues.

Its subcellular location is the membrane. The polypeptide is Leucine-rich repeat and transmembrane domain-containing protein 1 (LRTM1) (Homo sapiens (Human)).